The primary structure comprises 93 residues: MSTNTDLSLSSYDEGQGSKFIRKARETPFVPIGMAGFAAIVAYGLYKLKSRGNTKMSIHLIHMRVAAQGFVVGAMTLGMGYSMYQEFWAKRKP.

Serine 2 is modified (N-acetylserine). The region spanning 2-93 is the HIG1 domain; the sequence is STNTDLSLSS…YQEFWAKRKP (92 aa). The residue at position 8 (serine 8) is a Phosphoserine. 2 helical membrane passes run 28 to 48 and 69 to 89; these read PFVPIGMAGFAAIVAYGLYKL and GFVVGAMTLGMGYSMYQEFWA. The Mitochondrial matrix portion of the chain corresponds to 90–93; it reads KRKP.

As to quaternary structure, associates with cytochrome c oxidase (COX, complex IV); proposed complex component. Also associates with respiratory chain supercomplexes. In terms of tissue distribution, expressed in brain and spinal cord.

The protein resides in the mitochondrion membrane. It localises to the mitochondrion inner membrane. Functionally, proposed subunit of cytochrome c oxidase (COX, complex IV), which is the terminal component of the mitochondrial respiratory chain that catalyzes the reduction of oxygen to water. May play a role in the assembly of respiratory supercomplexes. This Rattus norvegicus (Rat) protein is HIG1 domain family member 1A, mitochondrial (Higd1a).